The primary structure comprises 334 residues: Dipeptide transport ATP-binding protein DppF (334 aa).

The ABC transporter domain occupies L13–L262. An ATP-binding site is contributed by G55–S62.

The protein belongs to the ABC transporter superfamily. In terms of assembly, the complex is composed of two ATP-binding proteins (DppD and DppF), two transmembrane proteins (DppB and DppC) and a solute-binding protein (DppA). MppA can replace DppA as binding protein for heme and ALA transport.

The protein localises to the cell inner membrane. The catalysed reaction is a dipeptide(out) + ATP + H2O = a dipeptide(in) + ADP + phosphate + H(+). Part of the ABC transporter DppABCDF involved in dipeptide transport. Responsible for energy coupling to the transport system. In terms of biological role, when a foreign outer membrane heme receptor is expressed in E.coli, DppABCDF can also transport heme and its precursor, 5-aminolevulinic acid (ALA), from the periplasm into the cytoplasm. The polypeptide is Dipeptide transport ATP-binding protein DppF (dppF) (Escherichia coli (strain K12)).